Here is a 215-residue protein sequence, read N- to C-terminus: Small ribosomal subunit protein uS7 (215 aa).

The protein belongs to the universal ribosomal protein uS7 family. As to quaternary structure, part of the 30S ribosomal subunit.

One of the primary rRNA binding proteins, it binds directly to 16S rRNA where it nucleates assembly of the head domain of the 30S subunit. Is located at the subunit interface close to the decoding center. In Thermococcus gammatolerans (strain DSM 15229 / JCM 11827 / EJ3), this protein is Small ribosomal subunit protein uS7.